The following is a 344-amino-acid chain: Heat-inducible transcription repressor HrcA (344 aa).

Belongs to the HrcA family.

Its function is as follows. Negative regulator of class I heat shock genes (grpE-dnaK-dnaJ and groELS operons). Prevents heat-shock induction of these operons. In Geobacillus sp. (strain WCH70), this protein is Heat-inducible transcription repressor HrcA.